The sequence spans 476 residues: Adenosylhomocysteinase (476 aa).

Threonine 62, aspartate 141, and glutamate 201 together coordinate substrate. 202-204 provides a ligand contact to NAD(+); the sequence is TTT. Positions 231 and 235 each coordinate substrate. Residues asparagine 236, 265 to 270, glutamate 288, asparagine 323, 344 to 346, and asparagine 389 contribute to the NAD(+) site; these read GYGDVG and IGH.

This sequence belongs to the adenosylhomocysteinase family. NAD(+) is required as a cofactor.

The protein resides in the cytoplasm. The catalysed reaction is S-adenosyl-L-homocysteine + H2O = L-homocysteine + adenosine. It functions in the pathway amino-acid biosynthesis; L-homocysteine biosynthesis; L-homocysteine from S-adenosyl-L-homocysteine: step 1/1. In terms of biological role, may play a key role in the regulation of the intracellular concentration of adenosylhomocysteine. The protein is Adenosylhomocysteinase of Delftia acidovorans (strain DSM 14801 / SPH-1).